The primary structure comprises 408 residues: Gustatory receptor 10a (408 aa).

The Cytoplasmic portion of the chain corresponds to 1–20 (MTSPDERKSFWERHEFKFYR). The helical transmembrane segment at 21–38 (YGHVYALIYGQVVIDYVP) threads the bilayer. Topologically, residues 39-48 (QRALKRGVKV) are extracellular. The helical transmembrane segment at 49 to 69 (LLIAYGHLFSMLLIVVLPGYF) threads the bilayer. The Cytoplasmic portion of the chain corresponds to 70–86 (CYHFRTLTDTLDRRLQL). A helical transmembrane segment spans residues 87–107 (LFYVSFTNTAIKYATVIVTYV). Residues 108–144 (ANTVHFEAINQRCTMQRTHLEFEFKNAPQEPKRPFEF) are Extracellular-facing. A helical membrane pass occupies residues 145–165 (FMYFKFCLINLMMMIQVCGIF). At 166–270 (AQYGEVGKGS…RESFRMHQFQ (105 aa)) the chain is on the cytoplasmic side. The chain crosses the membrane as a helical span at residues 271 to 291 (LIGLMLSTLINNLTNFYTLFH). The Extracellular segment spans residues 292 to 304 (MLAKQSLEEVSYP). A helical transmembrane segment spans residues 305–325 (VVVGSVYATGFYIDTYIVALI). Over 326 to 381 (NEHIKLELEAVALTMRRFAEPREMDERLTREIEHLSLELLNYQPPMLCGLLHLDRR) the chain is Cytoplasmic. The chain crosses the membrane as a helical span at residues 382–402 (LVYLIAVTAFSYFITLVQFDL). Residues 403-408 (YLRKKS) are Extracellular-facing.

The protein belongs to the insect chemoreceptor superfamily. Gustatory receptor (GR) family. Gr10a subfamily. In terms of tissue distribution, expressed in the medial aspect of the third antennal segment, and in neurons of the terminal external chemosensory organ of larvae.

Its subcellular location is the cell membrane. Functionally, probable gustatory receptor which mediates acceptance or avoidance behavior, depending on its substrates. The protein is Gustatory receptor 10a (Gr10a) of Drosophila melanogaster (Fruit fly).